Consider the following 376-residue polypeptide: UPF0754 membrane protein SE_1527 (376 aa).

Transmembrane regions (helical) follow at residues 4–24 (ILLV…TNMI) and 356–376 (TLGF…AIFV).

This sequence belongs to the UPF0754 family.

The protein resides in the cell membrane. The sequence is that of UPF0754 membrane protein SE_1527 from Staphylococcus epidermidis (strain ATCC 12228 / FDA PCI 1200).